Consider the following 192-residue polypeptide: Orotate phosphoribosyltransferase (192 aa).

Residue 116 to 124 participates in 5-phospho-alpha-D-ribose 1-diphosphate binding; sequence EDIVTTGLS. Positions 120 and 148 each coordinate orotate.

Belongs to the purine/pyrimidine phosphoribosyltransferase family. PyrE subfamily. In terms of assembly, homodimer. Requires Mg(2+) as cofactor.

The catalysed reaction is orotidine 5'-phosphate + diphosphate = orotate + 5-phospho-alpha-D-ribose 1-diphosphate. The protein operates within pyrimidine metabolism; UMP biosynthesis via de novo pathway; UMP from orotate: step 1/2. Catalyzes the transfer of a ribosyl phosphate group from 5-phosphoribose 1-diphosphate to orotate, leading to the formation of orotidine monophosphate (OMP). The chain is Orotate phosphoribosyltransferase from Bartonella bacilliformis (strain ATCC 35685 / KC583 / Herrer 020/F12,63).